The primary structure comprises 252 residues: Trans-aconitate 2-methyltransferase (252 aa).

Belongs to the methyltransferase superfamily. Tam family.

The protein resides in the cytoplasm. The catalysed reaction is trans-aconitate + S-adenosyl-L-methionine = (E)-3-(methoxycarbonyl)pent-2-enedioate + S-adenosyl-L-homocysteine. Functionally, catalyzes the S-adenosylmethionine monomethyl esterification of trans-aconitate. This Escherichia coli O17:K52:H18 (strain UMN026 / ExPEC) protein is Trans-aconitate 2-methyltransferase.